The chain runs to 35 residues: N-acylglucosamine 2-epimerase (35 aa).

The tract at residues 1-21 is leucine-zipper; it reads LNLVDQLGEADEELAGTYAEL.

The protein belongs to the N-acylglucosamine 2-epimerase family. Homodimer. Forms a heterodimer with renin and inhibits its activity.

It carries out the reaction an N-acyl-D-glucosamine = an N-acyl-D-mannosamine. Its pathway is amino-sugar metabolism; N-acetylneuraminate degradation. Its function is as follows. Catalyzes the interconversion of N-acetylglucosamine to N-acetylmannosamine. Involved in the N-glycolylneuraminic acid (Neu5Gc) degradation pathway. This Canis lupus familiaris (Dog) protein is N-acylglucosamine 2-epimerase.